Consider the following 443-residue polypeptide: PGPPPPAPEGRRRRGRGRNAAGQAVAAEASPAAVEMGNGAAAPGLQRPDAMGRFGRFGGKYVPETLMHALTELESAFHALATDDEFQKELDGILKDYVGRESPLYFAERLTEHYKRADGTGPLIYLKREDLNHTGAHKINNAVAQALLAKRLGKQRIIAETGAGQHGVATATVCRRFGLQCIIYMGAQDMERQALNVFRMRLLGAEVRAVHSGTATLKDATSEAIRDWVTNVETTHYILGSVAGPHPYPMMVREFHKVIGKETRRQAMDKWGGKPDVLVACVGGGSNAMGLFHEFVEDQDVRLVGLEAAGHGVDTDKHAATLTKGQVGVLHGSMSYLLQDDDGQVIEPHSISAGLDYPGVGPEHSFLKDIGRAEYDSVTDQEALDAFKRVSRLEGIIPALETSHALAYLEKLCPTLADGVRVVVNCSGRGDKDVHTASKYLDV.

A disordered region spans residues 1–32; sequence PGPPPPAPEGRRRRGRGRNAAGQAVAAEASPA. The N-terminal 45 residues, 1–45, are a transit peptide targeting the chloroplast; sequence PGPPPPAPEGRRRRGRGRNAAGQAVAAEASPAAVEMGNGAAAPGL. A compositionally biased stretch (low complexity) spans 18–32; sequence RNAAGQAVAAEASPA. Lys138 is subject to N6-(pyridoxal phosphate)lysine.

This sequence belongs to the TrpB family. As to quaternary structure, tetramer of two alpha and two beta chains. Pyridoxal 5'-phosphate is required as a cofactor.

It is found in the plastid. The protein localises to the chloroplast. It carries out the reaction (1S,2R)-1-C-(indol-3-yl)glycerol 3-phosphate + L-serine = D-glyceraldehyde 3-phosphate + L-tryptophan + H2O. Its pathway is amino-acid biosynthesis; L-tryptophan biosynthesis; L-tryptophan from chorismate: step 5/5. The beta subunit is responsible for the synthesis of L-tryptophan from indole and L-serine. In Zea mays (Maize), this protein is Tryptophan synthase beta chain 2, chloroplastic (TSB2).